Here is a 122-residue protein sequence, read N- to C-terminus: Large ribosomal subunit protein uL14 (122 aa).

This sequence belongs to the universal ribosomal protein uL14 family. In terms of assembly, part of the 50S ribosomal subunit. Forms a cluster with proteins L3 and L19. In the 70S ribosome, L14 and L19 interact and together make contacts with the 16S rRNA in bridges B5 and B8.

Binds to 23S rRNA. Forms part of two intersubunit bridges in the 70S ribosome. The chain is Large ribosomal subunit protein uL14 from Rickettsia rickettsii (strain Iowa).